A 297-amino-acid chain; its full sequence is MDWFHCNQCFRKDGAHFFVTSCGHIFCKKCMTLEKCAVCGNLCKHLALSDNLKPQEKKFFKSPVETALQCFSHISQVWCFQKKQTDLLIAFYKDRITKLEAAVKEAQEMAASQNKELSALRKENGELKKILDILKGSPSCYYGSRLTTPRPVGITSPSQSVAPRPSSHHSSQVVSRSSSMESIPYTVAGMGHVEQGSRGLHVRSTPGDSYTETPSPASTHSLSYRPSSASSGQGVSFRPFFSGDSGHTRVLTPNNSGRRESRTTPESLPGFQLPVLQTFYQQRQMGLARKDGWNISR.

The RING-type zinc-finger motif lies at 6-40 (CNQCFRKDGAHFFVTSCGHIFCKKCMTLEKCAVCG). Positions 87-136 (LLIAFYKDRITKLEAAVKEAQEMAASQNKELSALRKENGELKKILDILKG) form a coiled coil. Disordered regions lie at residues 152-179 (VGIT…RSSS) and 198-269 (RGLH…ESLP). Low complexity predominate over residues 163–179 (PRPSSHHSSQVVSRSSS). Residues 206-234 (PGDSYTETPSPASTHSLSYRPSSASSGQG) show a composition bias toward polar residues.

In terms of assembly, homodimer. In terms of processing, autoubiquitinated.

It localises to the chromosome. The catalysed reaction is S-ubiquitinyl-[E2 ubiquitin-conjugating enzyme]-L-cysteine + [acceptor protein]-L-lysine = [E2 ubiquitin-conjugating enzyme]-L-cysteine + N(6)-ubiquitinyl-[acceptor protein]-L-lysine.. It participates in protein modification; protein ubiquitination. Functionally, ubiquitin E3 ligase that acts as a crucial factor for crossing-over (CO) formation during meiosis. Essential for normal prophase I progression and for ensuring appropriate CO designation in meiosis. Recruits key components of the cross-over machinery either directly ou indirectly, leading to the activation of the MutL-gamma complex. The function of RNF212B in CO designation is dependent on its catalytic activity. The chain is E3 ubiquitin-protein ligase RNF212B (Rnf212b) from Mus musculus (Mouse).